A 178-amino-acid chain; its full sequence is Prion-like protein doppel (178 aa).

The first 25 residues, 1–25 (MRKHLGGCWLAIVCVLLFSQLSSVK), serve as a signal peptide directing secretion. A flexible tail region spans residues 27–50 (RGIKHRIKWNRKVLPSTSQVTEAH). Residues 51–154 (TAEIRPGAFI…KHCDFWLERG (104 aa)) form a globular region. 2 disulfide bridges follow: cysteine 94-cysteine 147 and cysteine 108-cysteine 142. Asparagine 98 and asparagine 110 each carry an N-linked (GlcNAc...) asparagine glycan. Positions 124–141 (KQDNKLYQRVLWQLIREL) are cu(2+) binding. Glycine 154 is lipidated: GPI-anchor amidated glycine. Positions 155–178 (AGLQVTLDQPMMLCLLVFIWFIVK) are cleaved as a propeptide — removed in mature form.

This sequence belongs to the prion family. In terms of processing, N-glycosylated. Post-translationally, O-glycosylated. Strongly expressed in testis. Detected at low levels in lymph node, spleen and ovary.

It localises to the cell membrane. Required for normal acrosome reaction and for normal male fertility. Can bind Cu(2+). In Ovis aries (Sheep), this protein is Prion-like protein doppel (PRND).